An 81-amino-acid polypeptide reads, in one-letter code: Small ribosomal subunit protein uS17 (81 aa).

It belongs to the universal ribosomal protein uS17 family. As to quaternary structure, part of the 30S ribosomal subunit.

One of the primary rRNA binding proteins, it binds specifically to the 5'-end of 16S ribosomal RNA. The polypeptide is Small ribosomal subunit protein uS17 (Hyphomonas neptunium (strain ATCC 15444)).